Reading from the N-terminus, the 176-residue chain is Cytidylate kinase (176 aa).

An ATP-binding site is contributed by 7–15 (GPPGSGTTS).

It belongs to the cytidylate kinase family. Type 2 subfamily.

Its subcellular location is the cytoplasm. The catalysed reaction is CMP + ATP = CDP + ADP. The enzyme catalyses dCMP + ATP = dCDP + ADP. In Methanosphaerula palustris (strain ATCC BAA-1556 / DSM 19958 / E1-9c), this protein is Cytidylate kinase.